Here is a 323-residue protein sequence, read N- to C-terminus: tRNA dimethylallyltransferase (323 aa).

An ATP-binding site is contributed by 27–34; the sequence is GPTGSGKT. Position 29-34 (29-34) interacts with substrate; it reads TGSGKT. Interaction with substrate tRNA stretches follow at residues 52–55 and 176–180; these read DSRQ and QRIVR.

It belongs to the IPP transferase family. Monomer. Mg(2+) is required as a cofactor.

The enzyme catalyses adenosine(37) in tRNA + dimethylallyl diphosphate = N(6)-dimethylallyladenosine(37) in tRNA + diphosphate. Catalyzes the transfer of a dimethylallyl group onto the adenine at position 37 in tRNAs that read codons beginning with uridine, leading to the formation of N6-(dimethylallyl)adenosine (i(6)A). This is tRNA dimethylallyltransferase from Desulfovibrio desulfuricans (strain ATCC 27774 / DSM 6949 / MB).